We begin with the raw amino-acid sequence, 144 residues long: Endoribonuclease YbeY (144 aa).

3 residues coordinate Zn(2+): histidine 108, histidine 112, and histidine 118.

Belongs to the endoribonuclease YbeY family. The cofactor is Zn(2+).

It is found in the cytoplasm. Single strand-specific metallo-endoribonuclease involved in late-stage 70S ribosome quality control and in maturation of the 3' terminus of the 16S rRNA. This chain is Endoribonuclease YbeY, found in Phytoplasma australiense.